We begin with the raw amino-acid sequence, 90 residues long: Small ribosomal subunit protein bS18 (90 aa).

The disordered stretch occupies residues 1–23; that stretch reads MKPMRQKNTRAQGNKSISNALAS. Residues 9–21 show a composition bias toward polar residues; it reads TRAQGNKSISNAL.

It belongs to the bacterial ribosomal protein bS18 family. Part of the 30S ribosomal subunit. Forms a tight heterodimer with protein bS6.

Functionally, binds as a heterodimer with protein bS6 to the central domain of the 16S rRNA, where it helps stabilize the platform of the 30S subunit. This chain is Small ribosomal subunit protein bS18, found in Chlorobium luteolum (strain DSM 273 / BCRC 81028 / 2530) (Pelodictyon luteolum).